A 962-amino-acid polypeptide reads, in one-letter code: Nonribosomal peptide synthetase atqA (962 aa).

The interval 34–462 (AANTTEGIIA…DGRTKEMVNI (429 aa)) is adenylation (A) domain. The Carrier domain maps to 595–672 (SAEEATILSI…GLCQRIAATS (78 aa)). Serine 630 carries the O-(pantetheine 4'-phosphoryl)serine modification. The interval 694–951 (PLWLVHPGVG…KPEYVANFAK (258 aa)) is thioesterase (TE) domain.

It belongs to the NRP synthetase family.

It participates in secondary metabolite biosynthesis. Nonribosomal peptide synthetase; part of the gene cluster that mediates the biosynthesis of asterriquinone CT5, a natural product that displays potential biological activities including antitumor and insulin mimic activities. The nonribosomal peptide synthetase atqA is responsible for the production of the benzoquinone derivative didemethylasterriquinone D (DDAQ D), via condensation of 2 indole pyruvic acid (IPA) molecules. The symmetric connectivity of the 2 IPA molecules is thought to arise by head-to-tail dual Claisen condensations catalyzed by the TE domain of atqA. DDAQ D represents the core structure of asterriquinones and is further modified by yet unidentified tailoring enzymes to lead to the production of asterriquinone CT5. The chain is Nonribosomal peptide synthetase atqA from Aspergillus terreus (strain NIH 2624 / FGSC A1156).